The following is a 100-amino-acid chain: Large ribosomal subunit protein bL21 (100 aa).

It belongs to the bacterial ribosomal protein bL21 family. Part of the 50S ribosomal subunit. Contacts protein L20.

This protein binds to 23S rRNA in the presence of protein L20. The protein is Large ribosomal subunit protein bL21 of Mycoplasma capricolum subsp. capricolum (strain California kid / ATCC 27343 / NCTC 10154).